A 164-amino-acid chain; its full sequence is 6,7-dimethyl-8-ribityllumazine synthase (164 aa).

5-amino-6-(D-ribitylamino)uracil-binding positions include Phe22, 56–58 (AWE), and 80–82 (AVI). Residue 85–86 (DT) coordinates (2S)-2-hydroxy-3-oxobutyl phosphate. Catalysis depends on His88, which acts as the Proton donor. 5-amino-6-(D-ribitylamino)uracil is bound at residue Leu113. Position 127 (Arg127) interacts with (2S)-2-hydroxy-3-oxobutyl phosphate.

It belongs to the DMRL synthase family.

It catalyses the reaction (2S)-2-hydroxy-3-oxobutyl phosphate + 5-amino-6-(D-ribitylamino)uracil = 6,7-dimethyl-8-(1-D-ribityl)lumazine + phosphate + 2 H2O + H(+). It functions in the pathway cofactor biosynthesis; riboflavin biosynthesis; riboflavin from 2-hydroxy-3-oxobutyl phosphate and 5-amino-6-(D-ribitylamino)uracil: step 1/2. In terms of biological role, catalyzes the formation of 6,7-dimethyl-8-ribityllumazine by condensation of 5-amino-6-(D-ribitylamino)uracil with 3,4-dihydroxy-2-butanone 4-phosphate. This is the penultimate step in the biosynthesis of riboflavin. The chain is 6,7-dimethyl-8-ribityllumazine synthase from Gemmatimonas aurantiaca (strain DSM 14586 / JCM 11422 / NBRC 100505 / T-27).